A 499-amino-acid chain; its full sequence is Xylulose kinase (499 aa).

81-82 (MH) is a binding site for substrate. Catalysis depends on aspartate 239, which acts as the Proton acceptor.

This sequence belongs to the FGGY kinase family.

It carries out the reaction D-xylulose + ATP = D-xylulose 5-phosphate + ADP + H(+). Functionally, catalyzes the phosphorylation of D-xylulose to D-xylulose 5-phosphate. The chain is Xylulose kinase from Bacillus subtilis (strain 168).